The following is a 194-amino-acid chain: Putative lipoprotein LppK (194 aa).

The signal sequence occupies residues 1-26; it reads MSRWTHRTFFIALSAIVTTAGFGSSG. A lipid anchor (N-palmitoyl cysteine) is attached at cysteine 27. Cysteine 27 carries S-diacylglycerol cysteine lipidation. The segment at 174 to 194 is disordered; it reads GNSSGLTNPAPIKAPTPTPSH. Positions 185–194 are enriched in pro residues; it reads IKAPTPTPSH.

Belongs to the MTB12 family.

The protein resides in the cell membrane. The polypeptide is Putative lipoprotein LppK (lppK) (Mycobacterium leprae (strain TN)).